The sequence spans 693 residues: Elongation factor G (693 aa).

The region spanning 8 to 282 (EKTRNIGIMA…AVIDYLPSPL (275 aa)) is the tr-type G domain. Residues 17-24 (AHVDAGKT), 81-85 (DTPGH), and 135-138 (NKMD) contribute to the GTP site.

Belongs to the TRAFAC class translation factor GTPase superfamily. Classic translation factor GTPase family. EF-G/EF-2 subfamily.

The protein resides in the cytoplasm. Its function is as follows. Catalyzes the GTP-dependent ribosomal translocation step during translation elongation. During this step, the ribosome changes from the pre-translocational (PRE) to the post-translocational (POST) state as the newly formed A-site-bound peptidyl-tRNA and P-site-bound deacylated tRNA move to the P and E sites, respectively. Catalyzes the coordinated movement of the two tRNA molecules, the mRNA and conformational changes in the ribosome. The chain is Elongation factor G from Streptococcus pneumoniae (strain CGSP14).